Here is a 275-residue protein sequence, read N- to C-terminus: Phosphate import ATP-binding protein PstB 1 (275 aa).

Residues 22–261 (IETRDLSVYY…DRTEKIFNSP (240 aa)) enclose the ABC transporter domain. 54 to 61 (GPSGCGKS) contacts ATP.

It belongs to the ABC transporter superfamily. Phosphate importer (TC 3.A.1.7) family. In terms of assembly, the complex is composed of two ATP-binding proteins (PstB), two transmembrane proteins (PstC and PstA) and a solute-binding protein (PstS).

The protein localises to the cell inner membrane. The catalysed reaction is phosphate(out) + ATP + H2O = ADP + 2 phosphate(in) + H(+). Functionally, part of the ABC transporter complex PstSACB involved in phosphate import. Responsible for energy coupling to the transport system. The polypeptide is Phosphate import ATP-binding protein PstB 1 (Synechococcus sp. (strain JA-3-3Ab) (Cyanobacteria bacterium Yellowstone A-Prime)).